Here is a 171-residue protein sequence, read N- to C-terminus: Sec-independent protein translocase protein TatB (171 aa).

Residues 1-21 (MFDIGFSELLLVFIIGLVVLG) form a helical membrane-spanning segment. Residues 117 to 171 (KDNEAAHEGVTPAAAQTQASSPEQKPETTPEPVVKPAADAEPKTAAPSPSSSDKP) are disordered. Positions 130 to 139 (AAQTQASSPE) are enriched in polar residues.

The protein belongs to the TatB family. As to quaternary structure, the Tat system comprises two distinct complexes: a TatABC complex, containing multiple copies of TatA, TatB and TatC subunits, and a separate TatA complex, containing only TatA subunits. Substrates initially bind to the TatABC complex, which probably triggers association of the separate TatA complex to form the active translocon.

Its subcellular location is the cell inner membrane. Functionally, part of the twin-arginine translocation (Tat) system that transports large folded proteins containing a characteristic twin-arginine motif in their signal peptide across membranes. Together with TatC, TatB is part of a receptor directly interacting with Tat signal peptides. TatB may form an oligomeric binding site that transiently accommodates folded Tat precursor proteins before their translocation. In Escherichia coli O157:H7, this protein is Sec-independent protein translocase protein TatB.